The primary structure comprises 121 residues: Large ribosomal subunit protein bL12 (121 aa).

This sequence belongs to the bacterial ribosomal protein bL12 family. As to quaternary structure, homodimer. Part of the ribosomal stalk of the 50S ribosomal subunit. Forms a multimeric L10(L12)X complex, where L10 forms an elongated spine to which 2 to 4 L12 dimers bind in a sequential fashion. Binds GTP-bound translation factors.

Forms part of the ribosomal stalk which helps the ribosome interact with GTP-bound translation factors. Is thus essential for accurate translation. This chain is Large ribosomal subunit protein bL12, found in Leuconostoc citreum (strain KM20).